A 621-amino-acid chain; its full sequence is UvrABC system protein C (621 aa).

Residues 13–92 form the GIY-YIG domain; that stretch reads EKPGVYLMKN…IKKYRPRYNI (80 aa). Residues 204-239 enclose the UVR domain; it reads NEVINDLKIKMEKASSELKFEEAASFRDKLLAVEKI.

The protein belongs to the UvrC family. Interacts with UvrB in an incision complex.

It is found in the cytoplasm. Functionally, the UvrABC repair system catalyzes the recognition and processing of DNA lesions. UvrC both incises the 5' and 3' sides of the lesion. The N-terminal half is responsible for the 3' incision and the C-terminal half is responsible for the 5' incision. The polypeptide is UvrABC system protein C (Clostridium novyi (strain NT)).